Here is a 548-residue protein sequence, read N- to C-terminus: 5-aminolevulinate synthase, mitochondrial (548 aa).

A mitochondrion-targeting transit peptide spans 1–22; it reads MQRSIFARFGNSSAAVSTLNRL. Positions 91, 204, and 223 each coordinate substrate. Residues Ser-256, His-284, and Thr-334 each contribute to the pyridoxal 5'-phosphate site. Residue Lys-337 is part of the active site. Lys-337 bears the N6-(pyridoxal phosphate)lysine mark. Residues Thr-366 and Thr-367 each coordinate pyridoxal 5'-phosphate. Substrate is bound at residue Thr-452.

The protein belongs to the class-II pyridoxal-phosphate-dependent aminotransferase family. As to quaternary structure, homodimer. Interacts with MCX1. Pyridoxal 5'-phosphate serves as cofactor.

It is found in the mitochondrion matrix. The catalysed reaction is succinyl-CoA + glycine + H(+) = 5-aminolevulinate + CO2 + CoA. It functions in the pathway porphyrin-containing compound metabolism; protoporphyrin-IX biosynthesis; 5-aminolevulinate from glycine: step 1/1. With respect to regulation, ihnhibited by hemin. Catalyzes the synthesis of 5-aminolevulinate (ALA) from succinyl-CoA and glycine, the first and rate-limiting step in heme biosynthesis. This Saccharomyces cerevisiae (strain ATCC 204508 / S288c) (Baker's yeast) protein is 5-aminolevulinate synthase, mitochondrial.